Reading from the N-terminus, the 60-residue chain is Cytotoxin 2 (60 aa).

Intrachain disulfides connect Cys3–Cys21, Cys14–Cys38, Cys42–Cys53, and Cys54–Cys59.

Belongs to the three-finger toxin family. Short-chain subfamily. Type IA cytotoxin sub-subfamily. In terms of assembly, monomer in solution; Homodimer and oligomer in the presence of negatively charged lipids forming a pore with a size ranging between 20 and 30 Angstroms. In terms of tissue distribution, expressed by the venom gland.

The protein resides in the secreted. It localises to the target cell membrane. In terms of biological role, shows cytolytic activity on many different cells by forming pore in lipid membranes. In vivo, increases heart rate or kills the animal by cardiac arrest. In addition, it binds to heparin with high affinity, interacts with Kv channel-interacting protein 1 (KCNIP1) in a calcium-independent manner, and binds to integrin alpha-V/beta-3 (ITGAV/ITGB3) with moderate affinity. The protein is Cytotoxin 2 of Naja mossambica (Mozambique spitting cobra).